We begin with the raw amino-acid sequence, 570 residues long: Proline--tRNA ligase (570 aa).

This sequence belongs to the class-II aminoacyl-tRNA synthetase family. ProS type 1 subfamily. In terms of assembly, homodimer.

The protein localises to the cytoplasm. It carries out the reaction tRNA(Pro) + L-proline + ATP = L-prolyl-tRNA(Pro) + AMP + diphosphate. Its function is as follows. Catalyzes the attachment of proline to tRNA(Pro) in a two-step reaction: proline is first activated by ATP to form Pro-AMP and then transferred to the acceptor end of tRNA(Pro). As ProRS can inadvertently accommodate and process non-cognate amino acids such as alanine and cysteine, to avoid such errors it has two additional distinct editing activities against alanine. One activity is designated as 'pretransfer' editing and involves the tRNA(Pro)-independent hydrolysis of activated Ala-AMP. The other activity is designated 'posttransfer' editing and involves deacylation of mischarged Ala-tRNA(Pro). The misacylated Cys-tRNA(Pro) is not edited by ProRS. The chain is Proline--tRNA ligase from Clostridium beijerinckii (strain ATCC 51743 / NCIMB 8052) (Clostridium acetobutylicum).